The chain runs to 225 residues: Leucyl/phenylalanyl-tRNA--protein transferase (225 aa).

Belongs to the L/F-transferase family.

It localises to the cytoplasm. The catalysed reaction is N-terminal L-lysyl-[protein] + L-leucyl-tRNA(Leu) = N-terminal L-leucyl-L-lysyl-[protein] + tRNA(Leu) + H(+). It carries out the reaction N-terminal L-arginyl-[protein] + L-leucyl-tRNA(Leu) = N-terminal L-leucyl-L-arginyl-[protein] + tRNA(Leu) + H(+). The enzyme catalyses L-phenylalanyl-tRNA(Phe) + an N-terminal L-alpha-aminoacyl-[protein] = an N-terminal L-phenylalanyl-L-alpha-aminoacyl-[protein] + tRNA(Phe). Functionally, functions in the N-end rule pathway of protein degradation where it conjugates Leu, Phe and, less efficiently, Met from aminoacyl-tRNAs to the N-termini of proteins containing an N-terminal arginine or lysine. In Rhodopseudomonas palustris (strain TIE-1), this protein is Leucyl/phenylalanyl-tRNA--protein transferase.